Here is a 596-residue protein sequence, read N- to C-terminus: Elongation factor 4 (596 aa).

Residues 2–184 (RNIRNFSIIA…AIVHRIPPPK (183 aa)) enclose the tr-type G domain. GTP-binding positions include 14 to 19 (DHGKST) and 131 to 134 (NKID).

The protein belongs to the TRAFAC class translation factor GTPase superfamily. Classic translation factor GTPase family. LepA subfamily.

It localises to the cell inner membrane. It catalyses the reaction GTP + H2O = GDP + phosphate + H(+). Required for accurate and efficient protein synthesis under certain stress conditions. May act as a fidelity factor of the translation reaction, by catalyzing a one-codon backward translocation of tRNAs on improperly translocated ribosomes. Back-translocation proceeds from a post-translocation (POST) complex to a pre-translocation (PRE) complex, thus giving elongation factor G a second chance to translocate the tRNAs correctly. Binds to ribosomes in a GTP-dependent manner. The chain is Elongation factor 4 from Xanthomonas euvesicatoria pv. vesicatoria (strain 85-10) (Xanthomonas campestris pv. vesicatoria).